We begin with the raw amino-acid sequence, 155 residues long: Vasotocin-neurophysin VT 2 (155 aa).

The signal sequence occupies residues M1–A20. C21 and C26 are disulfide-bonded. The residue at position 29 (G29) is a Glycine amide. Cystine bridges form between C42–C86, C45–C59, C53–C76, C60–C66, C93–C106, C100–C118, and C107–C112. Residues S119 to A128 show a composition bias toward acidic residues. The disordered stretch occupies residues S119–E139.

Belongs to the vasopressin/oxytocin family.

The protein resides in the secreted. Functionally, vasotocin is an antidiuretic hormone. This Catostomus commersonii (White sucker) protein is Vasotocin-neurophysin VT 2.